A 440-amino-acid polypeptide reads, in one-letter code: Proline--tRNA ligase (440 aa).

It belongs to the class-II aminoacyl-tRNA synthetase family. ProS type 2 subfamily. In terms of assembly, homodimer.

It is found in the cytoplasm. It catalyses the reaction tRNA(Pro) + L-proline + ATP = L-prolyl-tRNA(Pro) + AMP + diphosphate. Catalyzes the attachment of proline to tRNA(Pro) in a two-step reaction: proline is first activated by ATP to form Pro-AMP and then transferred to the acceptor end of tRNA(Pro). This is Proline--tRNA ligase from Rhizobium leguminosarum bv. trifolii (strain WSM2304).